Reading from the N-terminus, the 358-residue chain is Probable undecaprenyl-phosphate N-acetylglucosaminyl 1-phosphate transferase (358 aa).

A run of 11 helical transmembrane segments spans residues 10–32 (VVAF…RIAI), 53–72 (MGGL…SGIY), 76–93 (RMTA…LGIL), 105–127 (FLIQ…FFSV), 137–157 (GWMA…AINL), 164–181 (LAAG…VMAL), 186–205 (VLIL…FLFY), 218–235 (GSLF…LGLY), 240–262 (LFSI…FAII), 292–311 (MSVL…AIVL), and 316–338 (IWLS…EVTG).

This sequence belongs to the glycosyltransferase 4 family. It depends on Mg(2+) as a cofactor. Requires Mn(2+) as cofactor.

Its subcellular location is the cell membrane. It catalyses the reaction di-trans,octa-cis-undecaprenyl phosphate + UDP-N-acetyl-alpha-D-glucosamine = N-acetyl-alpha-D-glucosaminyl-di-trans,octa-cis-undecaprenyl diphosphate + UMP. It functions in the pathway cell wall biogenesis; poly(glucopyranosyl N-acetylgalactosamine 1-phosphate) teichoic acid biosynthesis. It participates in cell wall biogenesis; poly(glycerol phosphate) teichoic acid biosynthesis. Catalyzes the formation of undecaprenyl-PP-N-acetylglucosamine. Involved in the synthesis of anionic cell-wall polymers as it mediates the initiation of the linkage unit formation that appears to be common to the two types of teichoic acids attached to the peptidoglycan of B.subtilis; may also be involved in teichuronic acid biosynthesis. The protein is Probable undecaprenyl-phosphate N-acetylglucosaminyl 1-phosphate transferase (tagO) of Bacillus subtilis (strain 168).